Consider the following 446-residue polypeptide: Packaging protein 1 (446 aa).

A disordered region spans residues 1 to 71 (MEEKAGLGRL…QPQASKPKKH (71 aa)). The segment covering 31–43 (FHSDRNHPNKEAE) has biased composition (basic and acidic residues). 170–177 (GPTGCGKS) lines the ATP pocket. The DNA-binding stretch occupies residues 439-446 (RYYHSKKK).

Belongs to the adenoviridae packaging protein 1 family. Homodimer. Part of a genome packaging complex composed of packaging proteins 1, 2 and 3; this complex specifically binds to the packaging sequence on the left end of viral genomic DNA and performs packaging of the viral genome. Interacts with protein 33K.

The protein localises to the virion. Its subcellular location is the host nucleus. The protein resides in the host nucleoplasm. It localises to the host nucleolus. Component of the packaging machinery which encapsidates the viral DNA into preformed capsids and transcriptional activator of the viral major late promoter (MLP). Binds, along with packaging proteins 2 and 3, to the specific packaging sequence on the left end of viral genomic DNA and displays ATPase activity thereby providing the power stroke of the packaging machinery. The activity of packaging protein IVa2 is stimulated by protein 33K which acts as a terminase. May be the protein that pumps DNA into the capsid powered by ATP hydrolysis. Specifically binds to the 5'-CG-3' nucleotides of the repeats making up the packaging sequence. Component of the DEF-A and DEF-B transcription factors that bind downstream elements of the major late promoter (MLP), and stimulate transcription from the MLP after initiation of viral DNA replication. DEF-A is a heterodimer packaging proteins 1 and 2 and DEF-B is a homodimer of packaging protein 1. The polypeptide is Packaging protein 1 (Canine adenovirus serotype 2 (strain Toronto A 26-61) (CAdV-2)).